The primary structure comprises 374 residues: Cysteine-type anaerobic sulfatase-maturating enzyme (374 aa).

The Radical SAM core domain occupies 1-227 (MKSLSMLIKP…LNKLFDLWFK (227 aa)). The [4Fe-4S] cluster site is built by Cys15 and Cys19. Tyr21 provides a ligand contact to S-adenosyl-L-methionine. [4Fe-4S] cluster is bound at residue Cys22. Residues Gly66, Ser122, Arg134, and Leu195 each contribute to the S-adenosyl-L-methionine site. Residues Cys255, Cys261, and Cys276 each coordinate [4Fe-4S] cluster. Asp277 functions as the Proton acceptor in the catalytic mechanism. Positions 317, 320, 326, 330, and 348 each coordinate [4Fe-4S] cluster.

This sequence belongs to the radical SAM superfamily. Anaerobic sulfatase-maturating enzyme family. [4Fe-4S] cluster is required as a cofactor.

The catalysed reaction is L-cysteinyl-[sulfatase] + S-adenosyl-L-methionine + H2O = 3-oxo-L-alanyl-[sulfatase] + hydrogen sulfide + 5'-deoxyadenosine + L-methionine + 2 H(+). Its pathway is protein modification; sulfatase oxidation. In terms of biological role, involved in 'Cys-type' sulfatase maturation under anaerobic conditions. Catalyzes the post-translational modification of cysteine into 3-oxoalanine (also known as C(alpha)-formylglycine (FGly)), by a free radical chemical mechanism initiated via the reductive cleavage of S-adenosyl-L-methionine (SAM). The sequence is that of Cysteine-type anaerobic sulfatase-maturating enzyme from Clostridium novyi (strain NT).